A 647-amino-acid polypeptide reads, in one-letter code: Macrolide export ATP-binding/permease protein MacB 2 (647 aa).

Residues 6–244 (IQLKGIERRY…VTPTAAPAGK (239 aa)) enclose the ABC transporter domain. 42–49 (GASGSGKS) is an ATP binding site. Residues 223 to 247 (QEDSGRKPAAVPVTPTAAPAGKEGV) are disordered. Residues 230–242 (PAAVPVTPTAAPA) show a composition bias toward low complexity. Helical transmembrane passes span 273–293 (FLTMLGIIIGIAAVVSVVALG), 527–547 (IAVISLIVGGVGVMNIMLVSV), 581–601 (LGGMLGVGVSLFIGLLFSLFV), and 610–630 (LFSILMAFGCSSLIGILFGYL).

This sequence belongs to the ABC transporter superfamily. Macrolide exporter (TC 3.A.1.122) family. In terms of assembly, homodimer. Part of the tripartite efflux system MacAB-TolC, which is composed of an inner membrane transporter, MacB, a periplasmic membrane fusion protein, MacA, and an outer membrane component, TolC. The complex forms a large protein conduit and can translocate molecules across both the inner and outer membranes. Interacts with MacA.

The protein resides in the cell inner membrane. Functionally, part of the tripartite efflux system MacAB-TolC. MacB is a non-canonical ABC transporter that contains transmembrane domains (TMD), which form a pore in the inner membrane, and an ATP-binding domain (NBD), which is responsible for energy generation. Confers resistance against macrolides. This Aeromonas hydrophila subsp. hydrophila (strain ATCC 7966 / DSM 30187 / BCRC 13018 / CCUG 14551 / JCM 1027 / KCTC 2358 / NCIMB 9240 / NCTC 8049) protein is Macrolide export ATP-binding/permease protein MacB 2.